The chain runs to 313 residues: Ribose-phosphate pyrophosphokinase (313 aa).

Residues 37 to 39 (DGE) and 96 to 97 (RQ) each bind ATP. Mg(2+)-binding residues include His-131 and Asp-170. The active site involves Lys-193. Residues Arg-195, Asp-219, and 223-227 (DTAGT) each bind D-ribose 5-phosphate.

Belongs to the ribose-phosphate pyrophosphokinase family. Class I subfamily. In terms of assembly, homohexamer. It depends on Mg(2+) as a cofactor.

It localises to the cytoplasm. The catalysed reaction is D-ribose 5-phosphate + ATP = 5-phospho-alpha-D-ribose 1-diphosphate + AMP + H(+). The protein operates within metabolic intermediate biosynthesis; 5-phospho-alpha-D-ribose 1-diphosphate biosynthesis; 5-phospho-alpha-D-ribose 1-diphosphate from D-ribose 5-phosphate (route I): step 1/1. Involved in the biosynthesis of the central metabolite phospho-alpha-D-ribosyl-1-pyrophosphate (PRPP) via the transfer of pyrophosphoryl group from ATP to 1-hydroxyl of ribose-5-phosphate (Rib-5-P). This Pseudomonas syringae pv. tomato (strain ATCC BAA-871 / DC3000) protein is Ribose-phosphate pyrophosphokinase.